We begin with the raw amino-acid sequence, 64 residues long: DNA gyrase inhibitor YacG (64 aa).

C10, C13, C29, and C33 together coordinate Zn(2+).

This sequence belongs to the DNA gyrase inhibitor YacG family. In terms of assembly, interacts with GyrB. Requires Zn(2+) as cofactor.

In terms of biological role, inhibits all the catalytic activities of DNA gyrase by preventing its interaction with DNA. Acts by binding directly to the C-terminal domain of GyrB, which probably disrupts DNA binding by the gyrase. The sequence is that of DNA gyrase inhibitor YacG from Pectobacterium carotovorum subsp. carotovorum (strain PC1).